We begin with the raw amino-acid sequence, 329 residues long: Myoblast determination protein 1 homolog (329 aa).

Residues 160–211 (DRRKAATMRERRRLRKVNEAFEVVKQRTCPNPNQRLPKVEILRSAIDYINTL) enclose the bHLH domain. The disordered stretch occupies residues 256 to 279 (NPDGPNVYDDEDLSDTDEDRDHHH). Over residues 263 to 273 (YDDEDLSDTDE) the composition is skewed to acidic residues.

As to quaternary structure, efficient DNA binding requires dimerization with another bHLH protein. Body wall muscle cells; in clonal muscle precursors, in a set of early embryonic blastomeres (the ms-granddaughters), and in six glial-like cells called GLRS.

Its subcellular location is the nucleus. Its function is as follows. Accumulation defines the body wall muscle cell fate during embryogenesis. This chain is Myoblast determination protein 1 homolog (hlh-1), found in Caenorhabditis briggsae.